We begin with the raw amino-acid sequence, 218 residues long: Small ribosomal subunit protein uS3c (218 aa).

The 72-residue stretch at 47 to 118 (VQKNMRTSSG…KLNIAVTRIA (72 aa)) folds into the KH type-2 domain.

The protein belongs to the universal ribosomal protein uS3 family. In terms of assembly, part of the 30S ribosomal subunit.

It is found in the plastid. The protein localises to the chloroplast. This Nicotiana sylvestris (Wood tobacco) protein is Small ribosomal subunit protein uS3c (rps3).